Reading from the N-terminus, the 290-residue chain is Enoyl-CoA hydratase, mitochondrial (290 aa).

Residues 1–27 (MAALRALLPRVRAPLRPWLFCPVQRSF) constitute a mitochondrion transit peptide. Substrate is bound by residues 98-101 (ADIK) and G141. K101 is subject to N6-acetyllysine; alternate. K101 bears the N6-succinyllysine; alternate mark. K204 bears the N6-succinyllysine mark. K211 is subject to N6-acetyllysine.

Belongs to the enoyl-CoA hydratase/isomerase family. Homohexamer; dimer of trimers.

It localises to the mitochondrion matrix. It catalyses the reaction a (3S)-3-hydroxyacyl-CoA = a (2E)-enoyl-CoA + H2O. The catalysed reaction is a (3E)-enoyl-CoA = a 4-saturated (2E)-enoyl-CoA. The enzyme catalyses (3E)-hexenoyl-CoA = (2E)-hexenoyl-CoA. It carries out the reaction (3S)-3-hydroxybutanoyl-CoA = (2E)-butenoyl-CoA + H2O. It catalyses the reaction 3-hydroxyisovaleryl-CoA = 3-methylbut-2-enoyl-CoA + H2O. The catalysed reaction is 3-hydroxypropanoyl-CoA = acryloyl-CoA + H2O. The enzyme catalyses 3-hydroxybutanoyl-CoA = (2E)-butenoyl-CoA + H2O. It carries out the reaction 2-methylpropenoyl-CoA + H2O = (S)-3-hydroxyisobutanoyl-CoA. It catalyses the reaction (3S)-hydroxyhexanoyl-CoA = (2E)-hexenoyl-CoA + H2O. The catalysed reaction is (3S)-hydroxydecanoyl-CoA = (2E)-decenoyl-CoA + H2O. It participates in lipid metabolism; fatty acid beta-oxidation. Converts unsaturated trans-2-enoyl-CoA species ((2E)-enoyl-CoA) to the corresponding 3(S)-3-hydroxyacyl-CoA species through addition of a water molecule to the double bond. Catalyzes the hydration of medium- and short-chained fatty enoyl-CoA thioesters from 4 carbons long (C4) up to C16. Has high substrate specificity for crotonyl-CoA ((2E)-butenoyl-CoA) and moderate specificity for acryloyl-CoA, 3-methylcrotonyl-CoA (3-methyl-(2E)-butenoyl-CoA) and methacrylyl-CoA ((2E)-2-methylpropenoyl-CoA). Can bind tiglyl-CoA (2-methylcrotonoyl-CoA), but hydrates only a small amount of this substrate. Plays a key role in the beta-oxidation spiral of short- and medium-chain fatty acid oxidation. At a lower rate than the hydratase reaction, catalyzes the isomerase reaction of trans-3-enoyl-CoA species (such as (3E)-hexenoyl-CoA) to trans-2-enoyl-CoA species (such as (2E)-hexenoyl-CoA), which are subsequently hydrated to 3(S)-3-hydroxyacyl-CoA species (such as (3S)-hydroxyhexanoyl-CoA). The chain is Enoyl-CoA hydratase, mitochondrial (ECHS1) from Bos taurus (Bovine).